Consider the following 555-residue polypeptide: Formate--tetrahydrofolate ligase (555 aa).

Position 65–72 (65–72) interacts with ATP; the sequence is TPAGEGKS.

The protein belongs to the formate--tetrahydrofolate ligase family.

It catalyses the reaction (6S)-5,6,7,8-tetrahydrofolate + formate + ATP = (6R)-10-formyltetrahydrofolate + ADP + phosphate. It functions in the pathway one-carbon metabolism; tetrahydrofolate interconversion. This chain is Formate--tetrahydrofolate ligase, found in Staphylococcus epidermidis (strain ATCC 35984 / DSM 28319 / BCRC 17069 / CCUG 31568 / BM 3577 / RP62A).